Consider the following 381-residue polypeptide: MDYYVTLSPGLEKISKNEIESFGGKIKEIRENKGRIFFSGDLKLIPKINYLSRTIERMNILLHREEIPNIALDDIYKRVYNIDWTEWIKENQSFAIRPLRAGEHNFTSIDIGRVAGEAVIKSYQRDKNIRLKVNLDEPDVIVRVEVIFDELIVGIDTTGDIALDKRGYRVFNHPAHLNATIASSLVYLSDWKDDEMLLDPMCGSGTIPIEGALMKRNIPPGKFRENKYGFKFIDIFGYELLDKIKKEIVENKNIYKIIGLDKNQKYLDGAKDNAKNAEVLDTIEFICGDATKLHEKFNESDVIIANPPYGIRIGSKRSVKKLYDEFLSSAKEIMHGSSRLIVITAEDKMFKDAIAKNNFEVKEEFNVMFGGLMTRVFYLTL.

Residues Lys-43–Thr-157 enclose the THUMP domain. Residues His-173–Leu-177, Ser-204–Thr-206, Asp-261, Asp-289–Ala-290, and Asn-306 each bind S-adenosyl-L-methionine.

This sequence belongs to the methyltransferase superfamily.

It localises to the cytoplasm. The enzyme catalyses guanosine(6) in tRNA + S-adenosyl-L-methionine = N(2)-methylguanosine(6) in tRNA + S-adenosyl-L-homocysteine + H(+). S-adenosyl-L-methionine-dependent methyltransferase that catalyzes the methylation of the guanosine nucleotide at position 6 (m2G6) in tRNA(Cys). This Methanocaldococcus jannaschii (strain ATCC 43067 / DSM 2661 / JAL-1 / JCM 10045 / NBRC 100440) (Methanococcus jannaschii) protein is tRNA (guanine(6)-N2)-methyltransferase.